The sequence spans 113 residues: Protein INCREASED RESISTANCE TO MYZUS PERSICAE 1 (113 aa).

The FLZ-type zinc finger occupies 56–100 (DFLKTCSLCNRSLCHHRDIYMYRGNNAFCSLECREKQIKLDEKKA).

The protein belongs to the FLZ family. In terms of assembly, interacts with KIN10 and KIN11 via its FLZ-type zinc finger domain. Interacts with KINB3 via its N-terminal part. Interacts with GEBP.

Its subcellular location is the nucleus. The protein localises to the cytoplasm. May act as an adapter to facilitate the interaction of SnRK1 complex with effector proteins, conferring tissue- and stimulus-type specific differences in the SnRK1 regulation pathway. The chain is Protein INCREASED RESISTANCE TO MYZUS PERSICAE 1 from Arabidopsis thaliana (Mouse-ear cress).